The primary structure comprises 213 residues: Inactive ribonuclease-like protein 10 (213 aa).

Residues 1–24 (MKLTLVQIFFMMLLLLLGLGMGLG) form the signal peptide. Residue N131 is glycosylated (N-linked (GlcNAc...) asparagine).

It belongs to the pancreatic ribonuclease family. Post-translationally, the N-terminus is blocked. Glycosylated. Male-specific expression in proximal caput of the epididymis.

It localises to the secreted. In terms of biological role, secreted proximal epididymal protein required for post-testicular sperm maturation and male fertility. May be involved in sperm adhesion to the egg zona pellucida. Does not have ribonuclease activity. This Equus caballus (Horse) protein is Inactive ribonuclease-like protein 10 (RNASE10).